The sequence spans 256 residues: Doublecortin domain-containing protein (256 aa).

The partial p25alpha domain stretch occupies residues 71–103; sequence NVFERLTDTAYYTGSHRERFDEFGNGRGIAGRE. The Doublecortin domain maps to 152-226; the sequence is RLMWLYRNGD…AKYLCTSGEP (75 aa).

It localises to the cytoplasm. The protein localises to the cytoskeleton. Specifically required in the formation and maintenance of the conoid fibers; the conoid is a component of the cytoskeletal apical complex, which is composed of a left-handed spiral of 14 fibers made from a nontubular tubulin polymer. Promotes the organization, curvature, and stability of the conoid fibers, and probably bridges other conoid components to the tubulin core. This Toxoplasma gondii (strain ATCC 50861 / VEG) protein is Doublecortin domain-containing protein.